The primary structure comprises 419 residues: UDP-N-acetylglucosamine 1-carboxyvinyltransferase (419 aa).

22 to 23 lines the phosphoenolpyruvate pocket; that stretch reads KN. Arg91 contributes to the UDP-N-acetyl-alpha-D-glucosamine binding site. The Proton donor role is filled by Cys115. Cys115 carries the post-translational modification 2-(S-cysteinyl)pyruvic acid O-phosphothioketal. Residues 120–124, 160–163, Asp305, and Ile327 each bind UDP-N-acetyl-alpha-D-glucosamine; these read RPVDL and KVSV.

The protein belongs to the EPSP synthase family. MurA subfamily.

It is found in the cytoplasm. The enzyme catalyses phosphoenolpyruvate + UDP-N-acetyl-alpha-D-glucosamine = UDP-N-acetyl-3-O-(1-carboxyvinyl)-alpha-D-glucosamine + phosphate. Its pathway is cell wall biogenesis; peptidoglycan biosynthesis. Functionally, cell wall formation. Adds enolpyruvyl to UDP-N-acetylglucosamine. The polypeptide is UDP-N-acetylglucosamine 1-carboxyvinyltransferase (Sodalis glossinidius (strain morsitans)).